Consider the following 161-residue polypeptide: Phosphopantetheine adenylyltransferase (161 aa).

Residue S9 participates in substrate binding. Residues 9 to 10 (SF) and H17 each bind ATP. K41, T73, and R87 together coordinate substrate. ATP contacts are provided by residues 88-90 (GLR), E98, and 123-129 (YSFISST).

Belongs to the bacterial CoaD family. In terms of assembly, homohexamer. The cofactor is Mg(2+).

It is found in the cytoplasm. It catalyses the reaction (R)-4'-phosphopantetheine + ATP + H(+) = 3'-dephospho-CoA + diphosphate. Its pathway is cofactor biosynthesis; coenzyme A biosynthesis; CoA from (R)-pantothenate: step 4/5. Its function is as follows. Reversibly transfers an adenylyl group from ATP to 4'-phosphopantetheine, yielding dephospho-CoA (dPCoA) and pyrophosphate. The chain is Phosphopantetheine adenylyltransferase from Desulforamulus reducens (strain ATCC BAA-1160 / DSM 100696 / MI-1) (Desulfotomaculum reducens).